A 144-amino-acid chain; its full sequence is Large ribosomal subunit protein uL15 (144 aa).

A disordered region spans residues 1 to 62 (MELNNLKPAE…GQMPLQRRLP (62 aa)). A compositionally biased stretch (gly residues) spans 21 to 31 (RGIGSGLGKTA).

Belongs to the universal ribosomal protein uL15 family. Part of the 50S ribosomal subunit.

In terms of biological role, binds to the 23S rRNA. The polypeptide is Large ribosomal subunit protein uL15 (Paraburkholderia phymatum (strain DSM 17167 / CIP 108236 / LMG 21445 / STM815) (Burkholderia phymatum)).